Here is a 332-residue protein sequence, read N- to C-terminus: Anthranilate phosphoribosyltransferase (332 aa).

5-phospho-alpha-D-ribose 1-diphosphate contacts are provided by residues Gly79, 82-83 (GD), Ser87, 89-92 (NIST), 107-115 (KHGNRSVSS), and Ser119. Gly79 serves as a coordination point for anthranilate. Residue Ser91 participates in Mg(2+) binding. Asn110 is an anthranilate binding site. An anthranilate-binding site is contributed by Arg165. Positions 223 and 224 each coordinate Mg(2+).

It belongs to the anthranilate phosphoribosyltransferase family. Homodimer. Mg(2+) serves as cofactor.

It catalyses the reaction N-(5-phospho-beta-D-ribosyl)anthranilate + diphosphate = 5-phospho-alpha-D-ribose 1-diphosphate + anthranilate. It participates in amino-acid biosynthesis; L-tryptophan biosynthesis; L-tryptophan from chorismate: step 2/5. Functionally, catalyzes the transfer of the phosphoribosyl group of 5-phosphorylribose-1-pyrophosphate (PRPP) to anthranilate to yield N-(5'-phosphoribosyl)-anthranilate (PRA). This chain is Anthranilate phosphoribosyltransferase, found in Photorhabdus laumondii subsp. laumondii (strain DSM 15139 / CIP 105565 / TT01) (Photorhabdus luminescens subsp. laumondii).